The chain runs to 364 residues: Putative acetyl-CoA C-acetyltransferase YhfS (364 aa).

Cysteine 82 serves as the catalytic Acyl-thioester intermediate. The Proton acceptor role is filled by histidine 318.

Belongs to the thiolase-like superfamily. Thiolase family.

Its function is as follows. May be involved in fatty acid metabolism. The sequence is that of Putative acetyl-CoA C-acetyltransferase YhfS (yhfS) from Bacillus subtilis (strain 168).